Here is a 98-residue protein sequence, read N- to C-terminus: Large ribosomal subunit protein uL23 (98 aa).

Belongs to the universal ribosomal protein uL23 family. Part of the 50S ribosomal subunit. Contacts protein L29, and trigger factor when it is bound to the ribosome.

Functionally, one of the early assembly proteins it binds 23S rRNA. One of the proteins that surrounds the polypeptide exit tunnel on the outside of the ribosome. Forms the main docking site for trigger factor binding to the ribosome. This Streptococcus sanguinis (strain SK36) protein is Large ribosomal subunit protein uL23.